A 121-amino-acid polypeptide reads, in one-letter code: Ragulator complex protein LAMTOR4 homolog (121 aa).

The interval Thr-91–Ala-121 is disordered. The span at Asn-112–Ala-121 shows a compositional bias: polar residues.

This sequence belongs to the LAMTOR4 family. As to quaternary structure, part of the Ragulator complex.

It localises to the lysosome. Regulator of the TOR pathway, a signaling cascade that promotes cell growth in response to growth factors, energy levels, and amino acids. As part of the Ragulator complex, may activate the TOR signaling cascade in response to amino acids. In Drosophila pseudoobscura pseudoobscura (Fruit fly), this protein is Ragulator complex protein LAMTOR4 homolog.